Here is a 140-residue protein sequence, read N- to C-terminus: Nucleoside diphosphate kinase (140 aa).

ATP-binding residues include lysine 11, phenylalanine 59, arginine 87, threonine 93, arginine 104, and asparagine 114. Residue histidine 117 is the Pros-phosphohistidine intermediate of the active site.

This sequence belongs to the NDK family. As to quaternary structure, homotetramer. The cofactor is Mg(2+).

The protein localises to the cytoplasm. It catalyses the reaction a 2'-deoxyribonucleoside 5'-diphosphate + ATP = a 2'-deoxyribonucleoside 5'-triphosphate + ADP. The enzyme catalyses a ribonucleoside 5'-diphosphate + ATP = a ribonucleoside 5'-triphosphate + ADP. Its function is as follows. Major role in the synthesis of nucleoside triphosphates other than ATP. The ATP gamma phosphate is transferred to the NDP beta phosphate via a ping-pong mechanism, using a phosphorylated active-site intermediate. The protein is Nucleoside diphosphate kinase of Rickettsia conorii (strain ATCC VR-613 / Malish 7).